The following is a 201-amino-acid chain: Holliday junction branch migration complex subunit RuvA (201 aa).

The domain I stretch occupies residues 1-63; it reads MIASVRGEVL…EDSMTLYGFA (63 aa). The domain II stretch occupies residues 64–142; the sequence is DTEARDLFGL…LVPVQAGPPG (79 aa). Residues 143-153 are flexible linker; that stretch reads STPAVAATPVR. Residues 153–201 are domain III; that stretch reads REQVVEALTGLGFPLKQAEQALDTVLAEQPAADTSTALRAALSLLGKNR.

This sequence belongs to the RuvA family. As to quaternary structure, homotetramer. Forms an RuvA(8)-RuvB(12)-Holliday junction (HJ) complex. HJ DNA is sandwiched between 2 RuvA tetramers; dsDNA enters through RuvA and exits via RuvB. An RuvB hexamer assembles on each DNA strand where it exits the tetramer. Each RuvB hexamer is contacted by two RuvA subunits (via domain III) on 2 adjacent RuvB subunits; this complex drives branch migration. In the full resolvosome a probable DNA-RuvA(4)-RuvB(12)-RuvC(2) complex forms which resolves the HJ.

It is found in the cytoplasm. In terms of biological role, the RuvA-RuvB-RuvC complex processes Holliday junction (HJ) DNA during genetic recombination and DNA repair, while the RuvA-RuvB complex plays an important role in the rescue of blocked DNA replication forks via replication fork reversal (RFR). RuvA specifically binds to HJ cruciform DNA, conferring on it an open structure. The RuvB hexamer acts as an ATP-dependent pump, pulling dsDNA into and through the RuvAB complex. HJ branch migration allows RuvC to scan DNA until it finds its consensus sequence, where it cleaves and resolves the cruciform DNA. The protein is Holliday junction branch migration complex subunit RuvA of Nocardia farcinica (strain IFM 10152).